Here is a 403-residue protein sequence, read N- to C-terminus: GPI-N-acetylgalactosamine transferase PGAP4 (403 aa).

Over 1–22 (MTTSTSPAAMLLRRLRRLSWGS) the chain is Cytoplasmic. Residues 23–43 (TAVQLFILTVVTFGLLAPLAC) traverse the membrane as a helical segment. Over 44–264 (HRLLHSYFYL…INPEPMRILE (221 aa)) the chain is Lumenal. Val-109 provides a ligand contact to UDP-N-acetyl-alpha-D-galactosamine. 2 disulfides stabilise this stretch: Cys-132/Cys-136 and Cys-144/Cys-194. Residues 211-213 (EDD) carry the DXD motif motif. The chain crosses the membrane as a helical span at residues 265-285 (WVGVGMLLGPVLTWIYMRFAC). Residues 286–287 (RP) lie on the Cytoplasmic side of the membrane. Residues 288 to 308 (GFSWPVMLFFCLYSMGLVELV) form a helical membrane-spanning segment. At 309-403 (GRHYFLELRR…LRYNFHPSLL (95 aa)) the chain is on the lumenal side. Cys-332 and Cys-333 form a disulfide bridge. 3 residues coordinate UDP-N-acetyl-alpha-D-galactosamine: Thr-334, Pro-335, and Lys-362.

The protein belongs to the PGAP4 family. Glycosylated.

The protein localises to the golgi apparatus membrane. Golgi-resident glycosylphosphatidylinositol (GPI)-N-acetylgalactosamine transferase that catalyzes the N-acetyl-beta-D-galactosamine transfer from an UDP-N-acetyl-alpha-D-galactosamine to the 4-OH-position of first mannose of the glycosylphosphatidylinositol (GPI) of a GPI-anchored protein (GPI-AP). This modification occurs after the fatty acid remodeling step of the GPI-anchor maturation. This Mus musculus (Mouse) protein is GPI-N-acetylgalactosamine transferase PGAP4.